Consider the following 72-residue polypeptide: Cytochrome c oxidase subunit 2 (72 aa).

Residues 1–14 (MAHPSQLGFQDAAS) lie on the Mitochondrial intermembrane side of the membrane. The helical transmembrane segment at 15–45 (PVMEELLHFHDHALMIVFLISTLVLYIIVAM) threads the bilayer. Residues 46–72 (VSTKLTNKYXLDSQEIEVIWTXLPAVI) lie on the Mitochondrial matrix side of the membrane.

The protein belongs to the cytochrome c oxidase subunit 2 family. In terms of assembly, component of the cytochrome c oxidase (complex IV, CIV), a multisubunit enzyme composed of 14 subunits. The complex is composed of a catalytic core of 3 subunits MT-CO1, MT-CO2 and MT-CO3, encoded in the mitochondrial DNA, and 11 supernumerary subunits COX4I, COX5A, COX5B, COX6A, COX6B, COX6C, COX7A, COX7B, COX7C, COX8 and NDUFA4, which are encoded in the nuclear genome. The complex exists as a monomer or a dimer and forms supercomplexes (SCs) in the inner mitochondrial membrane with NADH-ubiquinone oxidoreductase (complex I, CI) and ubiquinol-cytochrome c oxidoreductase (cytochrome b-c1 complex, complex III, CIII), resulting in different assemblies (supercomplex SCI(1)III(2)IV(1) and megacomplex MCI(2)III(2)IV(2)). Found in a complex with TMEM177, COA6, COX18, COX20, SCO1 and SCO2. Interacts with TMEM177 in a COX20-dependent manner. Interacts with COX20. Interacts with COX16. Requires Cu cation as cofactor.

The protein resides in the mitochondrion inner membrane. It carries out the reaction 4 Fe(II)-[cytochrome c] + O2 + 8 H(+)(in) = 4 Fe(III)-[cytochrome c] + 2 H2O + 4 H(+)(out). In terms of biological role, component of the cytochrome c oxidase, the last enzyme in the mitochondrial electron transport chain which drives oxidative phosphorylation. The respiratory chain contains 3 multisubunit complexes succinate dehydrogenase (complex II, CII), ubiquinol-cytochrome c oxidoreductase (cytochrome b-c1 complex, complex III, CIII) and cytochrome c oxidase (complex IV, CIV), that cooperate to transfer electrons derived from NADH and succinate to molecular oxygen, creating an electrochemical gradient over the inner membrane that drives transmembrane transport and the ATP synthase. Cytochrome c oxidase is the component of the respiratory chain that catalyzes the reduction of oxygen to water. Electrons originating from reduced cytochrome c in the intermembrane space (IMS) are transferred via the dinuclear copper A center (CU(A)) of subunit 2 and heme A of subunit 1 to the active site in subunit 1, a binuclear center (BNC) formed by heme A3 and copper B (CU(B)). The BNC reduces molecular oxygen to 2 water molecules using 4 electrons from cytochrome c in the IMS and 4 protons from the mitochondrial matrix. The sequence is that of Cytochrome c oxidase subunit 2 (mt-co2) from Gomphosus varius (Bird wrasse).